A 533-amino-acid chain; its full sequence is DNA primase large subunit (533 aa).

[4Fe-4S] cluster-binding residues include cysteine 298, cysteine 377, cysteine 393, and cysteine 433. Residues 466-492 are disordered; sequence RQKRANGSAPPKARIRPDIKGHGDRSM. Residues 480-490 show a composition bias toward basic and acidic residues; that stretch reads IRPDIKGHGDR.

This sequence belongs to the eukaryotic-type primase large subunit family. Heterodimer of a catalytic subunit Prim1 and a regulatory subunit Prim2, also known as the DNA primase complex. Component of the alpha DNA polymerase complex (also known as the alpha DNA polymerase-primase complex) consisting of four subunits: the catalytic subunit PolA1, the regulatory subunit PolA2, and the primase complex subunits Prim1 and Prim2 respectively. PolA1 associates with the DNA primase complex before association with PolA2. The cofactor is [4Fe-4S] cluster. As to expression, expressed in embryos (at protein level).

Functionally, regulatory subunit of the DNA primase complex and component of the DNA polymerase alpha complex (also known as the alpha DNA polymerase-primase complex) which play an essential role in the initiation of DNA synthesis. During the S phase of the cell cycle, the DNA polymerase alpha complex (composed of a catalytic subunit PolA1, an accessory subunit PolA2 and two primase subunits, the catalytic subunit Prim1 and the regulatory subunit Prim2) is recruited to DNA at the replicative forks. The primase subunit of the polymerase alpha complex initiates DNA synthesis by oligomerising short RNA primers on both leading and lagging strands. These primers are initially extended by the polymerase alpha catalytic subunit and subsequently transferred to polymerase delta and polymerase epsilon for processive synthesis on the lagging and leading strand, respectively. In the primase complex, both subunits are necessary for the initial di-nucleotide formation, but the extension of the primer depends only on the catalytic subunit. Stabilizes and modulates the activity of the catalytic subunit. The protein is DNA primase large subunit of Drosophila melanogaster (Fruit fly).